Reading from the N-terminus, the 124-residue chain is Large ribosomal subunit protein bL17 (124 aa).

Belongs to the bacterial ribosomal protein bL17 family. In terms of assembly, part of the 50S ribosomal subunit. Contacts protein L32.

The protein is Large ribosomal subunit protein bL17 of Borrelia turicatae (strain 91E135).